Reading from the N-terminus, the 226-residue chain is Membrane protein (226 aa).

At 1-11 (MSNGSIPVDEV) the chain is on the virion surface side. A helical transmembrane segment spans residues 12 to 32 (IEHLRNWNFTWNIILTILLVV). Topologically, residues 33 to 41 (LQYGHYKYS) are intravirion. A helical transmembrane segment spans residues 42–62 (VFLYGVKMAILWILWPLVLAL). The Virion surface portion of the chain corresponds to 63–75 (SLFDAWASFQVNW). A helical transmembrane segment spans residues 76 to 96 (VFFAFSILMACITLMLWIMYF). Over 97 to 226 (VNSIRLWRRT…TDSEKVLHLV (130 aa)) the chain is Intravirion. The tract at residues 200 to 216 (RSKHGDYSAVSNPSAVL) is interaction with N protein.

Belongs to the alphacoronaviruses M protein family. As to quaternary structure, homomultimer. Interacts with envelope E protein in the budding compartment of the host cell, which is located between endoplasmic reticulum and the Golgi complex. Forms a complex with HE and S proteins. Interacts with nucleocapsid N protein. This interaction probably participates in RNA packaging into the virus.

The protein resides in the virion membrane. It localises to the host Golgi apparatus membrane. In terms of biological role, component of the viral envelope that plays a central role in virus morphogenesis and assembly via its interactions with other viral proteins. In Sus scrofa (Pig), this protein is Membrane protein.